Consider the following 906-residue polypeptide: UPF0182 protein CA_C0010 (906 aa).

7 consecutive transmembrane segments (helical) span residues 7-29 (IVTI…DFII), 47-69 (LAAI…WFYY), 96-118 (VAIV…VYWY), 153-175 (LYGV…YIVL), 208-230 (FAII…SFNL), 250-272 (LVFY…TSII), and 279-301 (IFVS…EIVQ). Residues 842–862 (NSSNNQSETRTETGGTSTDSS) are compositionally biased toward low complexity. A disordered region spans residues 842-875 (NSSNNQSETRTETGGTSTDSSNNKDKLKQAQDLY).

Belongs to the UPF0182 family.

Its subcellular location is the cell membrane. The polypeptide is UPF0182 protein CA_C0010 (Clostridium acetobutylicum (strain ATCC 824 / DSM 792 / JCM 1419 / IAM 19013 / LMG 5710 / NBRC 13948 / NRRL B-527 / VKM B-1787 / 2291 / W)).